The chain runs to 96 residues: Essential MCU regulator, mitochondrial (96 aa).

A mitochondrion-targeting transit peptide spans 1-34 (MIVSRLTFPLQAAKLVARKAAGNPSNSIIQRRHM). The chain crosses the membrane as a helical span at residues 52–72 (PFGLFAIFCAVIPGLFIGATI).

The protein belongs to the SMDT1/EMRE family.

The protein resides in the mitochondrion inner membrane. Functionally, essential regulatory subunit of the mitochondrial calcium uniporter (mcu) channel, a protein that mediates calcium uptake into mitochondria. This is Essential MCU regulator, mitochondrial from Drosophila pseudoobscura pseudoobscura (Fruit fly).